The chain runs to 184 residues: Glutathione-regulated potassium-efflux system ancillary protein KefG (184 aa).

It belongs to the NAD(P)H dehydrogenase (quinone) family. KefG subfamily. Interacts with KefB.

It localises to the cell inner membrane. The catalysed reaction is a quinone + NADH + H(+) = a quinol + NAD(+). It catalyses the reaction a quinone + NADPH + H(+) = a quinol + NADP(+). Functionally, regulatory subunit of a potassium efflux system that confers protection against electrophiles. Required for full activity of KefB. In Cronobacter sakazakii (strain ATCC BAA-894) (Enterobacter sakazakii), this protein is Glutathione-regulated potassium-efflux system ancillary protein KefG.